A 318-amino-acid chain; its full sequence is NADH-ubiquinone oxidoreductase chain 1 (318 aa).

The next 9 helical transmembrane spans lie at 2 to 22 (FLMNILCLVIPILLAMAFLTL), 37 to 57 (PNIVGPYGLLQPIADAIKLFI), 69 to 89 (LMFTLAPTLAFTLALSLWIPM), 100 to 120 (LGVLFILALSSLAVYSILWSG), 136 to 156 (VAQTISYEVTLAIILLSIMMM), 171 to 191 (HMWLIFPLWPLAMMWFISTLA), 231 to 251 (IIMMNALTTTLFLGAFHNPLF), 253 to 273 (ELFTVNFITKTLILTMMFLWV), and 293 to 313 (FLPLTLALCMFHVSMPALSAG).

This sequence belongs to the complex I subunit 1 family. In terms of assembly, core subunit of respiratory chain NADH dehydrogenase (Complex I) which is composed of 45 different subunits.

The protein resides in the mitochondrion inner membrane. It catalyses the reaction a ubiquinone + NADH + 5 H(+)(in) = a ubiquinol + NAD(+) + 4 H(+)(out). Core subunit of the mitochondrial membrane respiratory chain NADH dehydrogenase (Complex I) which catalyzes electron transfer from NADH through the respiratory chain, using ubiquinone as an electron acceptor. Essential for the catalytic activity and assembly of complex I. The chain is NADH-ubiquinone oxidoreductase chain 1 (MT-ND1) from Euphractus sexcinctus (Six-banded armadillo).